A 939-amino-acid chain; its full sequence is Valine--tRNA ligase (939 aa).

The 'HIGH' region motif lies at 47–57 (PNVTGILHMGH). Positions 563–567 (KLSKS) match the 'KMSKS' region motif. An ATP-binding site is contributed by K566. Positions 873–939 (AEHLAKEHAR…QSILDKIASL (67 aa)) form a coiled coil.

The protein belongs to the class-I aminoacyl-tRNA synthetase family. ValS type 1 subfamily. As to quaternary structure, monomer.

It localises to the cytoplasm. The enzyme catalyses tRNA(Val) + L-valine + ATP = L-valyl-tRNA(Val) + AMP + diphosphate. Its function is as follows. Catalyzes the attachment of valine to tRNA(Val). As ValRS can inadvertently accommodate and process structurally similar amino acids such as threonine, to avoid such errors, it has a 'posttransfer' editing activity that hydrolyzes mischarged Thr-tRNA(Val) in a tRNA-dependent manner. In Chlamydia muridarum (strain MoPn / Nigg), this protein is Valine--tRNA ligase.